The chain runs to 872 residues: Eukaryotic translation initiation factor 3 subunit C (872 aa).

The interval 1–100 (MSRFFRGGDD…KVKSAKDKRF (100 aa)) is disordered. 2 stretches are compositionally biased toward acidic residues: residues 16–59 (SSEE…DEEE) and 72–87 (SDDE…SDDE). The segment covering 88-100 (ATTKVKSAKDKRF) has biased composition (basic and acidic residues). In terms of domain architecture, PCI spans 613 to 787 (FHMHINLELL…ETVIFRKGVE (175 aa)). Positions 812–872 (TLEQKTQGSA…GGALGNAVRG (61 aa)) are disordered. Over residues 831 to 848 (GGGQRGGGQRGGRGGART) the composition is skewed to gly residues.

Belongs to the eIF-3 subunit C family. In terms of assembly, component of the eukaryotic translation initiation factor 3 (eIF-3) complex.

The protein resides in the cytoplasm. In terms of biological role, component of the eukaryotic translation initiation factor 3 (eIF-3) complex, which is involved in protein synthesis of a specialized repertoire of mRNAs and, together with other initiation factors, stimulates binding of mRNA and methionyl-tRNAi to the 40S ribosome. The eIF-3 complex specifically targets and initiates translation of a subset of mRNAs involved in cell proliferation. The chain is Eukaryotic translation initiation factor 3 subunit C (nip-1) from Neurospora crassa (strain ATCC 24698 / 74-OR23-1A / CBS 708.71 / DSM 1257 / FGSC 987).